Consider the following 377-residue polypeptide: Homoserine O-succinyltransferase (377 aa).

Positions 50–358 (NAVLICHALS…PSSYGHDSFL (309 aa)) constitute an AB hydrolase-1 domain. Ser156 acts as the Nucleophile in catalysis. Arg226 is a binding site for substrate. Catalysis depends on residues Asp321 and His354. Asp355 contributes to the substrate binding site.

This sequence belongs to the AB hydrolase superfamily. MetX family. In terms of assembly, homodimer.

The protein resides in the cytoplasm. The enzyme catalyses L-homoserine + succinyl-CoA = O-succinyl-L-homoserine + CoA. The protein operates within amino-acid biosynthesis; L-methionine biosynthesis via de novo pathway; O-succinyl-L-homoserine from L-homoserine: step 1/1. Its function is as follows. Transfers a succinyl group from succinyl-CoA to L-homoserine, forming succinyl-L-homoserine. This Nitrosomonas europaea (strain ATCC 19718 / CIP 103999 / KCTC 2705 / NBRC 14298) protein is Homoserine O-succinyltransferase.